The following is a 405-amino-acid chain: Coiled-coil domain-containing protein 91 (405 aa).

The tract at residues Met1–Asp16 is GGA1-binding motif. Positions Met1–Pro27 are disordered. 2 positions are modified to phosphoserine: Ser43 and Ser46. Positions Gly126–Gln376 form a coiled coil. Residues Leu210 to Arg377 are homodimerization.

In terms of assembly, homodimer. Interacts with GGA1, GGA2 and AP1G1.

It localises to the membrane. Its subcellular location is the golgi apparatus. The protein localises to the trans-Golgi network membrane. It is found in the trans-Golgi network. Functionally, involved in the regulation of membrane traffic through the trans-Golgi network (TGN). Functions in close cooperation with the GGAs in the sorting of hydrolases to lysosomes. The protein is Coiled-coil domain-containing protein 91 (CCDC91) of Pongo abelii (Sumatran orangutan).